Consider the following 445-residue polypeptide: Chromosome partition protein MukF (445 aa).

The tract at residues leucine 213–isoleucine 241 is leucine-zipper.

The protein belongs to the MukF family. In terms of assembly, interacts, and probably forms a ternary complex, with MukE and MukB via its C-terminal region. The complex formation is stimulated by calcium or magnesium. It is required for an interaction between MukE and MukB.

It localises to the cytoplasm. The protein localises to the nucleoid. In terms of biological role, involved in chromosome condensation, segregation and cell cycle progression. May participate in facilitating chromosome segregation by condensation DNA from both sides of a centrally located replisome during cell division. Not required for mini-F plasmid partitioning. Probably acts via its interaction with MukB and MukE. Overexpression results in anucleate cells. It has a calcium binding activity. This chain is Chromosome partition protein MukF, found in Vibrio vulnificus (strain YJ016).